We begin with the raw amino-acid sequence, 569 residues long: Acetate/butyrate--CoA ligase AAE7, peroxisomal (569 aa).

Positions 567 to 569 match the Microbody targeting signal motif; it reads SRL.

The protein belongs to the ATP-dependent AMP-binding enzyme family. In terms of tissue distribution, expressed in roots, leaves, stems, flowers and developing seeds.

It localises to the peroxisome. It catalyses the reaction acetate + ATP + CoA = acetyl-CoA + AMP + diphosphate. It carries out the reaction a medium-chain fatty acid + ATP + CoA = a medium-chain fatty acyl-CoA + AMP + diphosphate. In terms of biological role, peroxisomal acetate/butyrate--CoA ligase that is probably involved in the activation of exogenous acetate for entry into the glyoxylate cycle. May play a role to prevent carbon loss from peroxisomes during lipid mobilization. In vitro, is active with both acetate and butyrate. In Arabidopsis thaliana (Mouse-ear cress), this protein is Acetate/butyrate--CoA ligase AAE7, peroxisomal (AAE7).